A 472-amino-acid polypeptide reads, in one-letter code: Homeobox protein PKNOX2 (472 aa).

Residues 1-62 (MMQHASPAPA…STPVPSAPID (62 aa)) are disordered. Positions 26–38 (DSPQMTATAQPPS) are enriched in polar residues. Residues 46-56 (SAPSAAASTPV) show a composition bias toward low complexity. The MEIS N-terminal domain maps to 96 to 179 (GSECITSASF…MHSDNLLRND (84 aa)). The homeobox DNA-binding region spans 291 to 350 (KRGVLPKHATNIMRSWLFQHLMHPYPTEDEKRQIAAQTNLTLLQVNNWFINARRRILQPM). Disordered stretches follow at residues 351–371 (LDAS…QHRP), 386–405 (QQQG…LDNL), and 422–472 (MAAH…DSLE). Residues 361 to 371 (KAKKIKSQHRP) show a composition bias toward basic residues. The span at 429–454 (LDGTEEEDEDEMEEEEEEELEEEVDE) shows a compositional bias: acidic residues.

It belongs to the TALE/MEIS homeobox family.

It is found in the nucleus. The protein is Homeobox protein PKNOX2 (PKNOX2) of Homo sapiens (Human).